The sequence spans 573 residues: Solute carrier family 41 member 2 (573 aa).

At Met1–Gln162 the chain is on the extracellular side. Residues Ile163–Ile183 traverse the membrane as a helical segment. The Cytoplasmic segment spans residues Val184–Glu195. A helical membrane pass occupies residues Val196–Ser216. Residues Arg217 to Gln245 lie on the Extracellular side of the membrane. The chain crosses the membrane as a helical span at residues Val246–Pro266. At Glu267 to Ser282 the chain is on the cytoplasmic side. A helical transmembrane segment spans residues Val283–Gly303. Residues Ser304–Asn313 lie on the Extracellular side of the membrane. Residues Val314–Ile334 traverse the membrane as a helical segment. At Ser335–Tyr347 the chain is on the cytoplasmic side. Residues Val348–Ala368 traverse the membrane as a helical segment. At Lys369–Val376 the chain is on the extracellular side. The chain crosses the membrane as a helical span at residues Leu377–Ile397. At Leu398–Asn406 the chain is on the cytoplasmic side. A helical membrane pass occupies residues Leu407 to Ile427. The Extracellular portion of the chain corresponds to Gln428 to Ala469. Residues Gln470 to Met490 form a helical membrane-spanning segment. Topologically, residues Lys491–Pro499 are cytoplasmic. A helical membrane pass occupies residues Ile500–Ala520. The Extracellular portion of the chain corresponds to Asp521 to Thr543. Residues Ala544–Ile564 traverse the membrane as a helical segment. Topologically, residues Gly565 to Asp573 are cytoplasmic.

The protein belongs to the SLC41A transporter family.

The protein localises to the cell membrane. It catalyses the reaction Mg(2+)(in) = Mg(2+)(out). It carries out the reaction Mn(2+)(in) = Mn(2+)(out). The enzyme catalyses Co(2+)(in) = Co(2+)(out). The catalysed reaction is Ni(2+)(in) = Ni(2+)(out). It catalyses the reaction Fe(2+)(in) = Fe(2+)(out). Its function is as follows. Acts as a plasma-membrane magnesium transporter. Can also mediate the transport of other divalent metal cations in an order of Ba(2+) &gt; Ni(2+) &gt; Co(2+) &gt; Fe(2+) &gt; Mn(2+). This chain is Solute carrier family 41 member 2 (SLC41A2), found in Gallus gallus (Chicken).